Consider the following 499-residue polypeptide: Cytochrome P450 81Q32 (499 aa).

The helical transmembrane segment at 5 to 25 (TLLYTFLAVVLLSISLKLFPV) threads the bilayer. N-linked (GlcNAc...) asparagine glycans are attached at residues asparagine 112, asparagine 183, and asparagine 266. Cysteine 434 is a binding site for heme.

The protein belongs to the cytochrome P450 family. As to expression, expressed in leaf epidermis and in the leaf internal phloem-associated parenchyma (IPAP) inside the mesophyll.

It localises to the membrane. This Catharanthus roseus (Madagascar periwinkle) protein is Cytochrome P450 81Q32.